The primary structure comprises 189 residues: Peptidyl-tRNA hydrolase (189 aa).

TRNA is bound at residue Y15. H20 (proton acceptor) is an active-site residue. F66, N68, and N114 together coordinate tRNA.

Belongs to the PTH family. Monomer.

It localises to the cytoplasm. The catalysed reaction is an N-acyl-L-alpha-aminoacyl-tRNA + H2O = an N-acyl-L-amino acid + a tRNA + H(+). In terms of biological role, hydrolyzes ribosome-free peptidyl-tRNAs (with 1 or more amino acids incorporated), which drop off the ribosome during protein synthesis, or as a result of ribosome stalling. Catalyzes the release of premature peptidyl moieties from peptidyl-tRNA molecules trapped in stalled 50S ribosomal subunits, and thus maintains levels of free tRNAs and 50S ribosomes. This Streptococcus equi subsp. zooepidemicus (strain MGCS10565) protein is Peptidyl-tRNA hydrolase.